Reading from the N-terminus, the 212-residue chain is tRNA (guanine-N(7)-)-methyltransferase (212 aa).

Positions 44, 69, 96, and 118 each coordinate S-adenosyl-L-methionine. Residue Asp-118 is part of the active site. Lys-122 is a substrate binding site. Residues 124–129 (RHEKRR) form an interaction with RNA region. Substrate contacts are provided by residues Asp-154 and 192-195 (TEYE).

The protein belongs to the class I-like SAM-binding methyltransferase superfamily. TrmB family.

It carries out the reaction guanosine(46) in tRNA + S-adenosyl-L-methionine = N(7)-methylguanosine(46) in tRNA + S-adenosyl-L-homocysteine. It functions in the pathway tRNA modification; N(7)-methylguanine-tRNA biosynthesis. In terms of biological role, catalyzes the formation of N(7)-methylguanine at position 46 (m7G46) in tRNA. The protein is tRNA (guanine-N(7)-)-methyltransferase of Pediococcus pentosaceus (strain ATCC 25745 / CCUG 21536 / LMG 10740 / 183-1w).